The chain runs to 297 residues: Putative phosphate permease MJ0630 (297 aa).

Helical transmembrane passes span 2-22 (ITIE…LFIL), 45-65 (LLIL…NVGS), 67-87 (VNSL…VMTL), 99-119 (TVII…YVFG), 121-141 (ILLS…ILYS), 154-174 (ITMI…NLGS), 180-200 (VLGT…FLCL), 225-245 (FIAQ…GMPV), and 274-294 (NIIF…FIIN).

Belongs to the inorganic phosphate transporter (PiT) (TC 2.A.20) family.

The protein localises to the cell membrane. In terms of biological role, potential transporter for phosphate. The sequence is that of Putative phosphate permease MJ0630 from Methanocaldococcus jannaschii (strain ATCC 43067 / DSM 2661 / JAL-1 / JCM 10045 / NBRC 100440) (Methanococcus jannaschii).